We begin with the raw amino-acid sequence, 44 residues long: Defensin heliomicin (44 aa).

3 cysteine pairs are disulfide-bonded: C7-C32, C18-C40, and C22-C42.

The protein resides in the secreted. Functionally, this peptide has potent anti-fungal activity. Has no activity against Gram-negative and Gram-positive bacteria. The polypeptide is Defensin heliomicin (Heliothis virescens (Tobacco budworm moth)).